The sequence spans 326 residues: MEAQNQEVAALVEKIAGLHAAISKLPSLSPSAEVDALFTDLVTACVPASPVDVAKLGPEAQAMREELIRLCSAAEGHLEAHYADMLAAFDNPLDHLARFPYYGNYVNLSKLEYDLLVRYVPGIAPTRVAFVGSGPLPFSSLVLAAHHLPDAVFDNYDRCGAANERARRLFRGADEGLGARMAFHTADVATLTGELGAYDVVFLAALVGMAAEEKAGVIAHLGAHMADGAALVVRSAHGARGFLYPIVDLEDIRRGGFDVLAVYHPDDEVINSVIVARKADPRRGGGLAGARGAVPVVSPPCKCCKMEAAAGAFQKAEEFAAKRLSV.

Belongs to the nicotianamine synthase (NAS)-like family. As to expression, expressed in roots.

It catalyses the reaction 3 S-adenosyl-L-methionine = nicotianamine + 3 S-methyl-5'-thioadenosine + 3 H(+). Functionally, synthesizes nicotianamine, a polyamine that is the first intermediate in the synthesis of the phytosiderophores of the mugineic acid type found in gramineae which serve as a sensor for the physiological iron status within the plant, and/or might be involved in the transport of iron. The polypeptide is Nicotianamine synthase 2 (NAS2) (Oryza sativa subsp. japonica (Rice)).